A 201-amino-acid chain; its full sequence is Dephospho-CoA kinase (201 aa).

The 199-residue stretch at 3 to 201 (WIGLTGGIAC…KWLEELKNQN (199 aa)) folds into the DPCK domain. 11–16 (ACGKST) contributes to the ATP binding site.

Belongs to the CoaE family.

The protein localises to the cytoplasm. It catalyses the reaction 3'-dephospho-CoA + ATP = ADP + CoA + H(+). It functions in the pathway cofactor biosynthesis; coenzyme A biosynthesis; CoA from (R)-pantothenate: step 5/5. In terms of biological role, catalyzes the phosphorylation of the 3'-hydroxyl group of dephosphocoenzyme A to form coenzyme A. This Bdellovibrio bacteriovorus (strain ATCC 15356 / DSM 50701 / NCIMB 9529 / HD100) protein is Dephospho-CoA kinase.